A 200-amino-acid polypeptide reads, in one-letter code: Recombination protein RecR (200 aa).

The segment at 59 to 74 (CSTCGSLDTQDPCAIC) adopts a C4-type zinc-finger fold. Positions 82–177 (SLICVVEEVG…TVSMLARGVP (96 aa)) constitute a Toprim domain.

The protein belongs to the RecR family.

In terms of biological role, may play a role in DNA repair. It seems to be involved in an RecBC-independent recombinational process of DNA repair. It may act with RecF and RecO. This Phenylobacterium zucineum (strain HLK1) protein is Recombination protein RecR.